The primary structure comprises 676 residues: Envelope glycoprotein (676 aa).

An N-terminal signal peptide occupies residues 1-32 (MEGLSLLQLPRDKFRKSSFFVWVIILFQKAFS). At 33–650 (MPLGVVTNST…DDNWWTGWRQ (618 aa)) the chain is on the extracellular side. Asn40 carries N-linked (GlcNAc...) asparagine; by host glycosylation. 5 cysteine pairs are disulfide-bonded: Cys53/Cys609, Cys108/Cys135, Cys121/Cys147, Cys511/Cys556, and Cys601/Cys608. A receptor-binding region spans residues 54–201 (KDHLASTDQL…TFLQSPPIRE (148 aa)). Asn204, Asn208, Asn238, Asn257, Asn268, Asn296, and Asn314 each carry an N-linked (GlcNAc...) asparagine; by host glycan. A mucin-like region region spans residues 305-485 (ELSFETLSLN…STSNGLITST (181 aa)). Positions 313 to 351 (LNETEDDDATSSRTTKGRISDRATRKYSDLVPKDSPGMV) are disordered. Residues 330–344 (RISDRATRKYSDLVP) are compositionally biased toward basic and acidic residues. A glycan (N-linked (GlcNAc...) asparagine; by host) is linked at Asn366. The disordered stretch occupies residues 406 to 458 (SSSQILSSSPTMAPSPETQTSTTYTPKLPVMTTEESTTPPRNSPGSTTEAPTL). 2 stretches are compositionally biased toward polar residues: residues 415-430 (PTMA…TTYT) and 438-458 (TEES…APTL). The N-linked (GlcNAc...) asparagine; by host glycan is linked to Asn463. The tract at residues 524 to 539 (HNAAGIAWIPYFGPGA) is fusion peptide. The stretch at 554-595 (LVCGLRQLANETTQALQLFLRATTELRTYTILNRKAIDFLLR) forms a coiled coil. Asn563 is a glycosylation site (N-linked (GlcNAc...) asparagine; by host). Positions 615–634 (WTKNITDKINQIIHDFIDNP) form a coiled coil. Asn618 carries an N-linked (GlcNAc...) asparagine; by host glycan. Residues 651-671 (WIPAGIGITGIIIAIIALLCV) form a helical membrane-spanning segment. 2 S-palmitoyl cysteine; by host lipidation sites follow: Cys670 and Cys672. Topologically, residues 672–676 (CKLLC) are cytoplasmic.

It belongs to the filoviruses glycoprotein family. In terms of assembly, homotrimer; each monomer consists of a GP1 and a GP2 subunit linked by disulfide bonds. The resulting peplomers (GP1,2) protrude from the virus surface as spikes. Interacts with host integrin alpha-V/ITGAV. Interacts with host CLEC10A. Binds also to host CD209 and CLEC4M/DC-SIGN(R). Interacts with host FOLR1. Interacts with BST2; this interaction inhibits the antiviral effect of BST2 and this allows viral release from infected cells. Interacts with host FCN1; this interaction enhances viral entry. Interacts with host TLR4; this interaction induces cell death in T-lymphocytes or proinflammatory cytokines and SOCS1 production in monocytes. Interacts with host entry receptor NPC1. As to quaternary structure, GP1 and GP2delta are part of GP1,2delta soluble complexes released by ectodomain shedding. In terms of processing, the signal peptide region modulates GP's high mannose glycosylation, thereby determining the efficiency of the interactions with DC-SIGN(R). N-glycosylated. Post-translationally, O-glycosylated in the mucin-like region. In terms of processing, palmitoylation of GP2 is not required for its function. Specific enzymatic cleavages in vivo yield mature proteins. The precursor is processed into GP1 and GP2 by host cell furin in the trans Golgi, and maybe by other host proteases, to yield the mature GP1 and GP2 proteins. The cleavage site corresponds to the furin optimal cleavage sequence [KR]-X-[KR]-R. This cleavage does not seem to be required for function. After the internalization of the virus into cell endosomes, GP1 C-terminus is removed by the endosomal proteases cathepsin B, cathepsin L, or both, leaving a 19-kDa N-terminal fragment which is further digested by cathepsin B. Proteolytic processing of GP1,2 by host ADAM17 can remove the transmembrane anchor of GP2 and leads to shedding of complexes consisting in GP1 and truncated GP2 (GP1,2delta).

It is found in the virion membrane. The protein localises to the host cell membrane. It localises to the secreted. In terms of biological role, trimeric GP1,2 complexes form the virion surface spikes and mediate the viral entry processes, with GP1 acting as the receptor-binding subunit and GP2 as the membrane fusion subunit. At later times of infection, down-regulates the expression of various host cell surface molecules that are essential for immune surveillance and cell adhesion. Down-modulates several integrins including ITGA1, ITGA2, ITGA3, ITGA4, ITGA5, ITGA6, ITGAV and ITGB1. This decrease in cell adhesion molecules may lead to cell detachment, contributing to the disruption of blood vessel integrity and hemorrhages developed during infection (cytotoxicity). Interacts with host TLR4 and thereby stimulates the differentiation and activation of monocytes leading to bystander death of T-lymphocytes. Down-regulates as well the function of host natural killer cells. Counteracts the antiviral effect of host BST2/tetherin that restricts release of progeny virions from infected cells. However, cooperates with VP40 and host BST2 to activate canonical NF-kappa-B pathway in a manner dependent on neddylation. Functions as a decoy for anti-GP1,2 antibodies thereby contributing to viral immune evasion. Interacts and activates host macrophages and dendritic cells inducing up-regulation of cytokine transcription. This effect is mediated throught activation of host TLR4. Functionally, responsible for binding to the receptor(s) on target cells. Interacts with CD209/DC-SIGN and CLEC4M/DC-SIGNR which act as cofactors for virus entry into dendritic cells (DCs) and endothelial cells. Binding to the macrophage specific lectin CLEC10A also seem to enhance virus infectivity. Interaction with FOLR1/folate receptor alpha may be a cofactor for virus entry in some cell types, although results are contradictory. Members of the Tyro3 receptor tyrosine kinase family also seem to be cell entry factors in filovirus infection. Once attached, the virions are internalized through clathrin-dependent endocytosis and/or macropinocytosis. After internalization of the virus into the endosomes of the host cell, proteolysis of GP1 by two cysteine proteases, CTSB/cathepsin B and CTSL/cathepsin L removes the glycan cap and allows GP1 binding to the host entry receptor NPC1. NPC1-binding, Ca(2+) and acidic pH induce a conformational change of GP2, which unmasks its fusion peptide and permit membranes fusion. Its function is as follows. Acts as a class I viral fusion protein. Under the current model, the protein has at least 3 conformational states: pre-fusion native state, pre-hairpin intermediate state, and post-fusion hairpin state. During viral and target cell membrane fusion, the coiled coil regions (heptad repeats) assume a trimer-of-hairpins structure, positioning the fusion peptide in close proximity to the C-terminal region of the ectodomain. The formation of this structure appears to drive apposition and subsequent fusion of viral and target cell membranes. Responsible for penetration of the virus into the cell cytoplasm by mediating the fusion of the membrane of the endocytosed virus particle with the endosomal membrane. Low pH in endosomes induces an irreversible conformational change in GP2, releasing the fusion hydrophobic peptide. In Epomops franqueti (Franquet's epauletted fruit bat), this protein is Envelope glycoprotein (GP).